A 396-amino-acid chain; its full sequence is Subtilisin-like protease 5 (396 aa).

The first 20 residues, 1 to 20 (MTGFFTILSFSLAALSVTNA), serve as a signal peptide directing secretion. A propeptide spanning residues 21-116 (AQILSVPKGA…VEPDAIISQH (96 aa)) is cleaved from the precursor. An Inhibitor I9 domain is found at 37–113 (YIVVMKDDTS…VAFVEPDAII (77 aa)). Asparagine 63 carries an N-linked (GlcNAc...) asparagine glycan. The region spanning 125–396 (PWGLSRLSNR…TRLLYNGSGR (272 aa)) is the Peptidase S8 domain. Catalysis depends on charge relay system residues aspartate 156 and histidine 187. N-linked (GlcNAc...) asparagine glycosylation is found at asparagine 230 and asparagine 248. Serine 342 (charge relay system) is an active-site residue. Positions 377–389 (TIRNPGPDTTTRL) are enriched in polar residues. Residues 377–396 (TIRNPGPDTTTRLLYNGSGR) form a disordered region. Asparagine 392 carries N-linked (GlcNAc...) asparagine glycosylation.

It belongs to the peptidase S8 family.

It localises to the secreted. Secreted subtilisin-like serine protease with keratinolytic activity that contributes to pathogenicity. This Arthroderma benhamiae (Trichophyton mentagrophytes) protein is Subtilisin-like protease 5 (SUB5).